The following is an 80-amino-acid chain: UPF0181 protein SG1330 (80 aa).

A disordered region spans residues 58-80 (TEVLETPAARAETDPYDSNPDDD).

Belongs to the UPF0181 family.

In Sodalis glossinidius (strain morsitans), this protein is UPF0181 protein SG1330.